A 137-amino-acid polypeptide reads, in one-letter code: Peptide methionine sulfoxide reductase MsrB (137 aa).

The region spanning 7–129 is the MsrB domain; it reads PDHPATELNE…NSASLSFTDG (123 aa). 4 residues coordinate Zn(2+): Cys-46, Cys-49, Cys-95, and Cys-98. Cys-118 (nucleophile) is an active-site residue.

It belongs to the MsrB Met sulfoxide reductase family. The cofactor is Zn(2+).

The enzyme catalyses L-methionyl-[protein] + [thioredoxin]-disulfide + H2O = L-methionyl-(R)-S-oxide-[protein] + [thioredoxin]-dithiol. This is Peptide methionine sulfoxide reductase MsrB from Serratia proteamaculans (strain 568).